We begin with the raw amino-acid sequence, 311 residues long: Ornithine carbamoyltransferase (311 aa).

Carbamoyl phosphate-binding positions include 54 to 57 (STRT), Gln81, Arg105, and 132 to 135 (HPCQ). L-ornithine-binding positions include Asn163, Asp221, and 225-226 (SM). Residues 261–262 (CL) and Arg289 each bind carbamoyl phosphate.

The protein belongs to the aspartate/ornithine carbamoyltransferase superfamily. OTCase family.

It is found in the cytoplasm. It carries out the reaction carbamoyl phosphate + L-ornithine = L-citrulline + phosphate + H(+). The protein operates within amino-acid degradation; L-arginine degradation via ADI pathway; carbamoyl phosphate from L-arginine: step 2/2. Its function is as follows. Reversibly catalyzes the transfer of the carbamoyl group from carbamoyl phosphate (CP) to the N(epsilon) atom of ornithine (ORN) to produce L-citrulline. The sequence is that of Ornithine carbamoyltransferase from Azoarcus sp. (strain BH72).